Reading from the N-terminus, the 476-residue chain is Cytosolic iron-sulfur assembly component 3 (476 aa).

Alanine 2 bears the N-acetylalanine mark. [4Fe-4S] cluster contacts are provided by cysteine 24, cysteine 71, cysteine 74, cysteine 77, cysteine 190, and cysteine 246. The interval 297–316 is disordered; it reads DGLTSSVSAEEPSSHRGGGS. Positions 395 and 399 each coordinate [4Fe-4S] cluster.

This sequence belongs to the NARF family. External component of the CIA complex. In the CIA complex, interacts directly with CIAO1 and MMS19.

Component of the cytosolic iron-sulfur protein assembly (CIA) complex, a multiprotein complex that mediates the incorporation of iron-sulfur cluster into extramitochondrial Fe/S proteins. Seems to negatively regulate the level of HIF1A expression, although this effect could be indirect. In Mus musculus (Mouse), this protein is Cytosolic iron-sulfur assembly component 3 (Ciao3).